The sequence spans 179 residues: Large ribosomal subunit protein uL6 (179 aa).

It belongs to the universal ribosomal protein uL6 family. In terms of assembly, part of the 50S ribosomal subunit.

This protein binds to the 23S rRNA, and is important in its secondary structure. It is located near the subunit interface in the base of the L7/L12 stalk, and near the tRNA binding site of the peptidyltransferase center. This chain is Large ribosomal subunit protein uL6, found in Saccharopolyspora erythraea (strain ATCC 11635 / DSM 40517 / JCM 4748 / NBRC 13426 / NCIMB 8594 / NRRL 2338).